An 823-amino-acid chain; its full sequence is Valine--tRNA ligase (823 aa).

Residues 52–62 (PTVSGVLHMGH) carry the 'HIGH' region motif. The 'KMSKS' region motif lies at 549-553 (KMSKS). Lys552 contributes to the ATP binding site.

This sequence belongs to the class-I aminoacyl-tRNA synthetase family. ValS type 2 subfamily. Monomer.

The protein localises to the cytoplasm. It carries out the reaction tRNA(Val) + L-valine + ATP = L-valyl-tRNA(Val) + AMP + diphosphate. Catalyzes the attachment of valine to tRNA(Val). As ValRS can inadvertently accommodate and process structurally similar amino acids such as threonine, to avoid such errors, it has a 'posttransfer' editing activity that hydrolyzes mischarged Thr-tRNA(Val) in a tRNA-dependent manner. The sequence is that of Valine--tRNA ligase from Anaplasma marginale (strain St. Maries).